Consider the following 345-residue polypeptide: DNA primase small subunit PriS (345 aa).

Active-site residues include D95 and D97. Zn(2+) is bound by residues C106, H108, C114, and C117. The short motif at 106 to 117 is the Zinc knuckle motif element; it reads CNHEPGKVCPIC. The active site involves D280.

Belongs to the eukaryotic-type primase small subunit family. In terms of assembly, heterodimer of a small subunit (PriS) and a large subunit (PriL). Mg(2+) serves as cofactor. The cofactor is Mn(2+).

In terms of biological role, catalytic subunit of DNA primase, an RNA polymerase that catalyzes the synthesis of short RNA molecules used as primers for DNA polymerase during DNA replication. The small subunit contains the primase catalytic core and has DNA synthesis activity on its own, synthesizing DNA strands up to 3 kB. Binding to the large subunit stabilizes and modulates the activity, increasing the rate of DNA synthesis while decreasing the length of the DNA fragments, and conferring RNA synthesis capability for RNA fragments up to 150 bases. The DNA polymerase activity may enable DNA primase to also catalyze primer extension after primer synthesis. May also play a role in DNA repair. Displays gap-filling and strand-displacement activities. This Pyrococcus abyssi (strain GE5 / Orsay) protein is DNA primase small subunit PriS.